The sequence spans 498 residues: ATP synthase subunit beta, chloroplastic (498 aa).

172–179 provides a ligand contact to ATP; the sequence is GGAGVGKT.

It belongs to the ATPase alpha/beta chains family. In terms of assembly, F-type ATPases have 2 components, CF(1) - the catalytic core - and CF(0) - the membrane proton channel. CF(1) has five subunits: alpha(3), beta(3), gamma(1), delta(1), epsilon(1). CF(0) has four main subunits: a(1), b(1), b'(1) and c(9-12).

It localises to the plastid. Its subcellular location is the chloroplast thylakoid membrane. It catalyses the reaction ATP + H2O + 4 H(+)(in) = ADP + phosphate + 5 H(+)(out). Produces ATP from ADP in the presence of a proton gradient across the membrane. The catalytic sites are hosted primarily by the beta subunits. This chain is ATP synthase subunit beta, chloroplastic, found in Aspidistra elatior (Cast-iron plant).